Here is a 424-residue protein sequence, read N- to C-terminus: Serine hydroxymethyltransferase 2 (424 aa).

Residues leucine 125 and 129–131 (GHL) contribute to the (6S)-5,6,7,8-tetrahydrofolate site. Lysine 234 is modified (N6-(pyridoxal phosphate)lysine). Glutamate 250 serves as a coordination point for (6S)-5,6,7,8-tetrahydrofolate.

This sequence belongs to the SHMT family. Homodimer. It depends on pyridoxal 5'-phosphate as a cofactor.

The protein localises to the cytoplasm. The catalysed reaction is (6R)-5,10-methylene-5,6,7,8-tetrahydrofolate + glycine + H2O = (6S)-5,6,7,8-tetrahydrofolate + L-serine. It functions in the pathway one-carbon metabolism; tetrahydrofolate interconversion. It participates in amino-acid biosynthesis; glycine biosynthesis; glycine from L-serine: step 1/1. In terms of biological role, catalyzes the reversible interconversion of serine and glycine with tetrahydrofolate (THF) serving as the one-carbon carrier. This reaction serves as the major source of one-carbon groups required for the biosynthesis of purines, thymidylate, methionine, and other important biomolecules. Also exhibits THF-independent aldolase activity toward beta-hydroxyamino acids, producing glycine and aldehydes, via a retro-aldol mechanism. This chain is Serine hydroxymethyltransferase 2, found in Ralstonia nicotianae (strain ATCC BAA-1114 / GMI1000) (Ralstonia solanacearum).